The chain runs to 102 residues: Small ribosomal subunit protein uS10 (102 aa).

The protein belongs to the universal ribosomal protein uS10 family. As to quaternary structure, part of the 30S ribosomal subunit.

Functionally, involved in the binding of tRNA to the ribosomes. This chain is Small ribosomal subunit protein uS10, found in Thermotoga maritima (strain ATCC 43589 / DSM 3109 / JCM 10099 / NBRC 100826 / MSB8).